A 321-amino-acid polypeptide reads, in one-letter code: MKPSVVLYKSLPEDLRARLDEHCHVTEINGLTAENIAKHEDVFRQAEGILGSGGKVDAEFLRQAPKLRVASSISVGYDNFDVAALNDRGVLLMHTPTVLTETVADTMMALVLSSARRVVEMAERVKSGEWRGSISSDWFGIDVHHKKLGILGMGRIGLALAQRAHLGFGMPILYNARKHHDEAEQRFDAEYCDLDTLLAESDFLCISLPLTEQTHHLIGREQLAKMKRSAILINAGRGPVVDEQALIAALKDGTLHAAGLDVFEQEPLPVSSELLALRNVVALPHIGSATHETRYGMAKDAVDNLIAALNGKVEKNCVNPR.

Active-site residues include Arg-237 and Glu-266. His-285 (proton donor) is an active-site residue.

It belongs to the D-isomer specific 2-hydroxyacid dehydrogenase family. GhrB subfamily. In terms of assembly, homodimer.

The protein localises to the cytoplasm. The enzyme catalyses glycolate + NADP(+) = glyoxylate + NADPH + H(+). The catalysed reaction is (R)-glycerate + NAD(+) = 3-hydroxypyruvate + NADH + H(+). It catalyses the reaction (R)-glycerate + NADP(+) = 3-hydroxypyruvate + NADPH + H(+). Its function is as follows. Catalyzes the NADPH-dependent reduction of glyoxylate and hydroxypyruvate into glycolate and glycerate, respectively. This chain is Glyoxylate/hydroxypyruvate reductase B, found in Erwinia tasmaniensis (strain DSM 17950 / CFBP 7177 / CIP 109463 / NCPPB 4357 / Et1/99).